The primary structure comprises 428 residues: Adenylosuccinate synthetase (428 aa).

Residues 12–18 (GDEGKGK) and 40–42 (GHT) each bind GTP. Residue Asp13 is the Proton acceptor of the active site. 2 residues coordinate Mg(2+): Asp13 and Gly40. IMP-binding positions include 13 to 16 (DEGK), 38 to 41 (NAGH), Thr128, Arg142, Gln222, Thr237, and Arg301. His41 acts as the Proton donor in catalysis. Position 297–303 (297–303 (VNTGRAR)) interacts with substrate. GTP is bound by residues Arg303, 329–331 (KLD), and 411–413 (STS).

It belongs to the adenylosuccinate synthetase family. As to quaternary structure, homodimer. It depends on Mg(2+) as a cofactor.

The protein localises to the cytoplasm. It catalyses the reaction IMP + L-aspartate + GTP = N(6)-(1,2-dicarboxyethyl)-AMP + GDP + phosphate + 2 H(+). It functions in the pathway purine metabolism; AMP biosynthesis via de novo pathway; AMP from IMP: step 1/2. Functionally, plays an important role in the de novo pathway of purine nucleotide biosynthesis. Catalyzes the first committed step in the biosynthesis of AMP from IMP. This Caulobacter sp. (strain K31) protein is Adenylosuccinate synthetase.